Reading from the N-terminus, the 120-residue chain is Methylglyoxal synthase (120 aa).

The region spanning 1–120 is the MGS-like domain; the sequence is MRIALIAHDN…TAEILVESVL (120 aa). Substrate contacts are provided by residues H8, K12, and 54 to 55; that span reads SG. Catalysis depends on D60, which acts as the Proton donor/acceptor. H87 provides a ligand contact to substrate.

The protein belongs to the methylglyoxal synthase family.

The enzyme catalyses dihydroxyacetone phosphate = methylglyoxal + phosphate. Its function is as follows. Catalyzes the formation of methylglyoxal from dihydroxyacetone phosphate. The protein is Methylglyoxal synthase of Natranaerobius thermophilus (strain ATCC BAA-1301 / DSM 18059 / JW/NM-WN-LF).